A 205-amino-acid chain; its full sequence is Thymidine kinase (205 aa).

Residues 9–16 (SAMNAGKS) and 87–90 (DECQ) contribute to the ATP site. Glu88 serves as the catalytic Proton acceptor. 4 residues coordinate Zn(2+): Cys145, Cys147, Cys182, and His185.

It belongs to the thymidine kinase family. In terms of assembly, homotetramer.

It localises to the cytoplasm. It catalyses the reaction thymidine + ATP = dTMP + ADP + H(+). In Shigella dysenteriae serotype 1 (strain Sd197), this protein is Thymidine kinase.